The primary structure comprises 838 residues: Xyloglucanase (838 aa).

Positions 1-19 (MKVSRVLALVLGAVIPAHA) are cleaved as a signal peptide. The Nucleophile role is filled by Asp53. Asn232 and Asn436 each carry an N-linked (GlcNAc...) asparagine glycan. The Proton donor role is filled by Asp469. The tract at residues 750–801 (GTGGTSSSTKQSSSSTSSASSSTTLRSSVVSTTRASTVTSSRTSSAAGPTGS) is disordered. Residues 754–797 (TSSSTKQSSSSTSSASSSTTLRSSVVSTTRASTVTSSRTSSAAG) are compositionally biased toward low complexity. The CBM1 domain maps to 802-838 (GVAGHYAQCGGIGWTGPTQCVAPYVCQKQNDYYYQCV).

The protein belongs to the glycosyl hydrolase 74 family.

The catalysed reaction is Hydrolysis of (1-&gt;4)-D-glucosidic linkages in xyloglucans so as to successively remove oligosaccharides from the newly-formed chain end after endo-initiation on a polymer molecule.. Hydrolyzes the glucosidic bonds of unbranched Glc residues in tamarind seed xyloglucan, producing XXXG, XLXG, XXLG and XLLG. Has a low activity against beta-glucan and carboxymethylcellulose. Not active against Avicel, laminarin, xylan, galactomannan, linear and branched arabinans, galactan, polygalacturonic acid, starch, beta-D-Glcp, beta-D-cellobiose, beta-D-Galp, beta-D-Xylp, alpha-D-Xylp, alpha-L-Araf and alpha-L-Arap. This chain is Xyloglucanase, found in Hypocrea jecorina (strain QM6a) (Trichoderma reesei).